The following is a 353-amino-acid chain: Suppressor of RNA-mediated gene silencing (353 aa).

This sequence belongs to the phytoreovirus non-structural protein 10 family.

In terms of biological role, suppressor of RNA-mediated gene silencing, also known as post-transcriptional gene silencing (PTGS), a mechanism of plant viral defense that limits the accumulation of viral RNAs. The chain is Suppressor of RNA-mediated gene silencing from Rice dwarf virus (isolate Fujian) (RDV).